Here is a 406-residue protein sequence, read N- to C-terminus: Arginine deiminase (406 aa).

Residue Cys396 is the Amidino-cysteine intermediate of the active site.

It belongs to the arginine deiminase family.

It is found in the cytoplasm. It catalyses the reaction L-arginine + H2O = L-citrulline + NH4(+). The protein operates within amino-acid degradation; L-arginine degradation via ADI pathway; carbamoyl phosphate from L-arginine: step 1/2. This chain is Arginine deiminase, found in Aliivibrio salmonicida (strain LFI1238) (Vibrio salmonicida (strain LFI1238)).